The chain runs to 506 residues: ATP synthase subunit alpha (506 aa).

Position 170–177 (170–177 (GDRQTGKT)) interacts with ATP.

The protein belongs to the ATPase alpha/beta chains family. F-type ATPases have 2 components, CF(1) - the catalytic core - and CF(0) - the membrane proton channel. CF(1) has five subunits: alpha(3), beta(3), gamma(1), delta(1), epsilon(1). CF(0) has four main subunits: a(1), b(1), b'(1) and c(9-12).

It localises to the cellular thylakoid membrane. The catalysed reaction is ATP + H2O + 4 H(+)(in) = ADP + phosphate + 5 H(+)(out). Its function is as follows. Produces ATP from ADP in the presence of a proton gradient across the membrane. The alpha chain is a regulatory subunit. The chain is ATP synthase subunit alpha from Synechococcus sp. (strain JA-2-3B'a(2-13)) (Cyanobacteria bacterium Yellowstone B-Prime).